The primary structure comprises 520 residues: YERLDLDVTSQTTGEEYFRFITLLRDYVSSGSFSNEIPLLRQSGGGVEAARFVLVELTNEGGDSITAAIDVTNLYVVAYQAGSQSYFLSGPGTHLFTGTTRSSLPFNGSYPDLEQYAGHRKQIPLGIDQLIQSVTALRFPGNTRTQARSILILIQMISEAARFNPILWRARQYINSGASFLPDVYMLELETSWGQQSTQVQQSTEGVFNNPIRLAIPGNFVTLTNVRDVIASLAIMLFVCGERPSSSDVRYWPLVIRPVIADDVTCSASEPTVRIVGRNGMNVDVRDDDFHDGNQIQLWPSKSNNDPNQLWTIKRDGTIRSNGSCLTTYGYTAGVYVMIFDCNTAVREATIWQIWGNGTIINPRSNLALAASSGIKGTTLTVQTLDYTLGQGWLAGNDTAPREVTIYGFNDLCMESNGGSVWVETCVSQQNDRWALYGDGSIRPEQNQDQCLTSGRDSVAGINIVSCSGGSSGQRWVFTNEGAILNLKNGLAMDVANPGLGQIIIYPATGKPNQMWLPVP.

A glycan (N-linked (GlcNAc...) asparagine) is linked at Asn107. Glu159 is an active-site residue. The cysteines at positions 240 and 266 are disulfide-linked. A propeptide spans 241–265 (connecting peptide); it reads GERPSSSDVRYWPLVIRPVIADDVT. The 128-residue stretch at 269–396 folds into the Ricin B-type lectin 1 domain; it reads SEPTVRIVGR…YTLGQGWLAG (128 aa). 284 to 286 contacts D-galactose; sequence DVR. N-linked (GlcNAc...) asparagine glycosylation occurs at Asn322. Residues Cys325 and Cys342 are joined by a disulfide bond. N-linked (GlcNAc...) asparagine glycans are attached at residues Asn357 and Asn397. Positions 400–520 constitute a Ricin B-type lectin 2 domain; it reads APREVTIYGF…KPNQMWLPVP (121 aa). 2 disulfides stabilise this stretch: Cys413–Cys426 and Cys451–Cys467. 494–496 is a D-galactose binding site; that stretch reads DVA.

This sequence belongs to the ribosome-inactivating protein family. Type 2 RIP subfamily. As to quaternary structure, disulfide-linked dimer of A and B chains.

It catalyses the reaction Endohydrolysis of the N-glycosidic bond at one specific adenosine on the 28S rRNA.. Functionally, the A chain is responsible for inhibiting protein synthesis through the catalytic inactivation of 60S ribosomal subunits by removing adenine from position 4,324 of 28S rRNA. The B chain binds to cell receptors and probably facilitates the entry into the cell of the A chain; B chains are also responsible for cell agglutination (lectin activity). Inhibits growth of the human tumor cell line Molt4. The chain is Beta-galactoside-specific lectin 4 from Viscum album (European mistletoe).